We begin with the raw amino-acid sequence, 263 residues long: Ribonuclease HII (263 aa).

The 192-residue stretch at 71–262 (QAIAGIDEVG…VKSMCCDSTN (192 aa)) folds into the RNase H type-2 domain. A divalent metal cation contacts are provided by D77, E78, and D172.

It belongs to the RNase HII family. It depends on Mn(2+) as a cofactor. Requires Mg(2+) as cofactor.

It is found in the cytoplasm. It carries out the reaction Endonucleolytic cleavage to 5'-phosphomonoester.. Endonuclease that specifically degrades the RNA of RNA-DNA hybrids. This chain is Ribonuclease HII, found in Streptococcus pyogenes serotype M5 (strain Manfredo).